Consider the following 201-residue polypeptide: Two-component response regulator ORR10 (201 aa).

In terms of domain architecture, Response regulatory spans 10 to 142; that stretch reads HVLAVDDSLP…DMSKLKPHIL (133 aa). Residue aspartate 75 is modified to 4-aspartylphosphate. The interval 149–201 is disordered; sequence HYQQEQHLQSNSESNNSSNPTSENSSSSTSTNSHKRKAVDEEILPHTIRPRHS. Residues 158–180 show a composition bias toward low complexity; it reads SNSESNNSSNPTSENSSSSTSTN.

The protein belongs to the ARR family. Type-A subfamily. In terms of processing, two-component system major event consists of a His-to-Asp phosphorelay between a sensor histidine kinase (HK) and a response regulator (RR). In plants, the His-to-Asp phosphorelay involves an additional intermediate named Histidine-containing phosphotransfer protein (HPt). This multistep phosphorelay consists of a His-Asp-His-Asp sequential transfer of a phosphate group between first a His and an Asp of the HK protein, followed by the transfer to a conserved His of the HPt protein and finally the transfer to an Asp in the receiver domain of the RR protein. As to expression, expressed in mature leaves, and at low levels in roots, shoots and flowers.

In terms of biological role, functions as a response regulator involved in His-to-Asp phosphorelay signal transduction system. Phosphorylation of the Asp residue in the receiver domain activates the ability of the protein to promote the transcription of target genes. Type-A response regulators seem to act as negative regulators of the cytokinin signaling. The protein is Two-component response regulator ORR10 of Oryza sativa subsp. indica (Rice).